The chain runs to 320 residues: tRNA N6-adenosine threonylcarbamoyltransferase (320 aa).

Positions 114 and 118 each coordinate Fe cation. Substrate is bound by residues 136–140, aspartate 169, glycine 182, aspartate 186, and asparagine 273; that span reads VVSGG. A Fe cation-binding site is contributed by aspartate 297.

It belongs to the KAE1 / TsaD family. Requires Fe(2+) as cofactor.

It is found in the cytoplasm. The catalysed reaction is L-threonylcarbamoyladenylate + adenosine(37) in tRNA = N(6)-L-threonylcarbamoyladenosine(37) in tRNA + AMP + H(+). Functionally, required for the formation of a threonylcarbamoyl group on adenosine at position 37 (t(6)A37) in tRNAs that read codons beginning with adenine. Is involved in the transfer of the threonylcarbamoyl moiety of threonylcarbamoyl-AMP (TC-AMP) to the N6 group of A37, together with TsaE and TsaB. TsaD likely plays a direct catalytic role in this reaction. The sequence is that of tRNA N6-adenosine threonylcarbamoyltransferase from Ureaplasma parvum serovar 3 (strain ATCC 27815 / 27 / NCTC 11736).